Reading from the N-terminus, the 432-residue chain is Acyl-CoA dehydrogenase AFT10-1 (432 aa).

The protein belongs to the acyl-CoA dehydrogenase family. FAD serves as cofactor.

It participates in mycotoxin biosynthesis. Functionally, acyl-CoA dehydrogenase; part of the gene clusters that mediate the biosynthesis of the host-selective toxins (HSTs) AF-toxins responsible for Alternaria black spot of strawberry disease by the strawberry pathotype. AF-toxin I and III are valine derivatives of 2,3-dyhydroxy-isovaleric acid and 2-hydroxy-isovaleric acid respectively, while AF II is an isoleucine derivative of 2-hydroxy-valeric acid. These derivatives are bound to a 9,10-epoxy-8-hydroxy-9-methyl-decatrienoic acid (EDA) moiety. On cellular level, AF-toxins affect plasma membrane of susceptible cells and cause a sudden increase in loss of K(+) after a few minutes of toxin treatment. The aldo-keto reductase AFTS1 catalyzes the conversion of 2-keto-isovaleric acid (2-KIV) to 2-hydroxy-isovaleric acid (2-HIV) by reduction of its ketone to an alcohol. The acyl-CoA ligase AFT1, the hydrolase AFT2 and the enoyl-CoA hydratases AFT3 and AFT6, but also the polyketide synthase AFT9, the acyl-CoA dehydrogenase AFT10, the cytochrome P450 monooxygenase AFT11 and the oxidoreductase AFT12 are all involved in the biosynthesis of the AK-, AF- and ACT-toxin common EDA structural moiety. The exact function of each enzyme, and of additional enzymes identified within the AF-toxin clusters have still to be determined. The chain is Acyl-CoA dehydrogenase AFT10-1 from Alternaria alternata (Alternaria rot fungus).